We begin with the raw amino-acid sequence, 363 residues long: Chalcone synthase B (363 aa).

Cys170 is an active-site residue.

This sequence belongs to the thiolase-like superfamily. Chalcone/stilbene synthases family.

It carries out the reaction (E)-4-coumaroyl-CoA + 3 malonyl-CoA + 3 H(+) = 2',4,4',6'-tetrahydroxychalcone + 3 CO2 + 4 CoA. It participates in secondary metabolite biosynthesis; flavonoid biosynthesis. Functionally, the primary product of this enzyme is 4,2',4',6'-tetrahydroxychalcone (also termed naringenin-chalcone or chalcone) which can under specific conditions spontaneously isomerize into naringenin. The protein is Chalcone synthase B (CHSB) of Ipomoea cordatotriloba (Tievine).